We begin with the raw amino-acid sequence, 319 residues long: tRNA uridine(34) hydroxylase (319 aa).

Residues 127 to 221 form the Rhodanese domain; sequence KQEDTVIIDA…YGKDPEVQGE (95 aa). The active-site Cysteine persulfide intermediate is C181.

This sequence belongs to the TrhO family.

It catalyses the reaction uridine(34) in tRNA + AH2 + O2 = 5-hydroxyuridine(34) in tRNA + A + H2O. In terms of biological role, catalyzes oxygen-dependent 5-hydroxyuridine (ho5U) modification at position 34 in tRNAs. In Bacillus cereus (strain G9842), this protein is tRNA uridine(34) hydroxylase.